We begin with the raw amino-acid sequence, 332 residues long: ADP-L-glycero-D-manno-heptose-6-epimerase (332 aa).

NADP(+) contacts are provided by residues 10-11 (FI), 31-32 (DD), lysine 38, 74-78 (QGACS), and asparagine 91. The active-site Proton acceptor is the tyrosine 138. Residue lysine 142 coordinates NADP(+). Substrate is bound at residue asparagine 167. 2 residues coordinate NADP(+): valine 168 and lysine 176. Lysine 176 acts as the Proton acceptor in catalysis. Residues arginine 178, histidine 185, 199–202 (FSGW), arginine 212, and tyrosine 291 each bind substrate.

Belongs to the NAD(P)-dependent epimerase/dehydratase family. HldD subfamily. In terms of assembly, homopentamer. The cofactor is NADP(+).

It carries out the reaction ADP-D-glycero-beta-D-manno-heptose = ADP-L-glycero-beta-D-manno-heptose. It functions in the pathway nucleotide-sugar biosynthesis; ADP-L-glycero-beta-D-manno-heptose biosynthesis; ADP-L-glycero-beta-D-manno-heptose from D-glycero-beta-D-manno-heptose 7-phosphate: step 4/4. In terms of biological role, catalyzes the interconversion between ADP-D-glycero-beta-D-manno-heptose and ADP-L-glycero-beta-D-manno-heptose via an epimerization at carbon 6 of the heptose. This Bordetella avium (strain 197N) protein is ADP-L-glycero-D-manno-heptose-6-epimerase.